The primary structure comprises 75 residues: UPF0352 protein YejL (75 aa).

It belongs to the UPF0352 family.

In Shigella flexneri, this protein is UPF0352 protein YejL.